Consider the following 282-residue polypeptide: D-alanine aminotransferase (282 aa).

A substrate-binding site is contributed by Tyr32. Arg51 contributes to the pyridoxal 5'-phosphate binding site. Residues Arg99 and His101 each contribute to the substrate site. Catalysis depends on Lys146, which acts as the Proton acceptor. Residue Lys146 is modified to N6-(pyridoxal phosphate)lysine. Glu178 is a binding site for pyridoxal 5'-phosphate.

It belongs to the class-IV pyridoxal-phosphate-dependent aminotransferase family. As to quaternary structure, homodimer. It depends on pyridoxal 5'-phosphate as a cofactor.

The enzyme catalyses D-alanine + 2-oxoglutarate = D-glutamate + pyruvate. Functionally, acts on the D-isomers of alanine, leucine, aspartate, glutamate, aminobutyrate, norvaline and asparagine. The enzyme transfers an amino group from a substrate D-amino acid to the pyridoxal phosphate cofactor to form pyridoxamine and an alpha-keto acid in the first half-reaction. The second half-reaction is the reverse of the first, transferring the amino group from the pyridoxamine to a second alpha-keto acid to form the product D-amino acid via a ping-pong mechanism. This is an important process in the formation of D-alanine and D-glutamate, which are essential bacterial cell wall components. The polypeptide is D-alanine aminotransferase (dat) (Staphylococcus aureus (strain MSSA476)).